Reading from the N-terminus, the 379-residue chain is Ribosomal RNA large subunit methyltransferase G (379 aa).

This sequence belongs to the methyltransferase superfamily. RlmG family.

It is found in the cytoplasm. It catalyses the reaction guanosine(1835) in 23S rRNA + S-adenosyl-L-methionine = N(2)-methylguanosine(1835) in 23S rRNA + S-adenosyl-L-homocysteine + H(+). Specifically methylates the guanine in position 1835 (m2G1835) of 23S rRNA. The chain is Ribosomal RNA large subunit methyltransferase G from Pectobacterium atrosepticum (strain SCRI 1043 / ATCC BAA-672) (Erwinia carotovora subsp. atroseptica).